We begin with the raw amino-acid sequence, 318 residues long: NADH-ubiquinone oxidoreductase chain 1 (318 aa).

8 helical membrane-spanning segments follow: residues 2 to 22, 69 to 89, 102 to 122, 146 to 166, 171 to 191, 222 to 242, 253 to 273, and 294 to 314; these read FLIN…FLTL, FLFT…WAPL, LLFI…SGWA, MTTI…TAFA, HLWL…STLA, LFFM…VILF, EIST…FLWV, and LPLT…LACI.

The protein belongs to the complex I subunit 1 family.

Its subcellular location is the mitochondrion inner membrane. The catalysed reaction is a ubiquinone + NADH + 5 H(+)(in) = a ubiquinol + NAD(+) + 4 H(+)(out). Core subunit of the mitochondrial membrane respiratory chain NADH dehydrogenase (Complex I) that is believed to belong to the minimal assembly required for catalysis. Complex I functions in the transfer of electrons from NADH to the respiratory chain. The immediate electron acceptor for the enzyme is believed to be ubiquinone. This Mammuthus primigenius (Siberian woolly mammoth) protein is NADH-ubiquinone oxidoreductase chain 1 (MT-ND1).